The primary structure comprises 277 residues: Bis(5'-nucleosyl)-tetraphosphatase, symmetrical (277 aa).

It belongs to the Ap4A hydrolase family.

The catalysed reaction is P(1),P(4)-bis(5'-adenosyl) tetraphosphate + H2O = 2 ADP + 2 H(+). In terms of biological role, hydrolyzes diadenosine 5',5'''-P1,P4-tetraphosphate to yield ADP. This is Bis(5'-nucleosyl)-tetraphosphatase, symmetrical from Bordetella pertussis (strain Tohama I / ATCC BAA-589 / NCTC 13251).